The sequence spans 820 residues: Protein phosphatase 1 regulatory subunit 29 (820 aa).

A signal peptide spans 1–22 (MLRLGLCAAALLCVCRPGAVRA). The Extracellular segment spans residues 23 to 397 (DCWLIEGDKG…APSTSTTTHY (375 aa)). N-linked (GlcNAc...) asparagine glycosylation occurs at Asn-54. 5 LRR repeats span residues 56–77 (TVHDLRLNENKLKAVLYSSLNR), 80–101 (NLTDLNLTKNEISYIEDGAFLG), 104–125 (SLQVLQLGYNKLSNLTEGMLRG), 128–149 (RLQFLFVQHNLIEVVTPTAFSE), and 152–173 (SLISIDLSSNRLSRLDGATFAS). N-linked (GlcNAc...) asparagine glycosylation is found at Asn-80, Asn-85, and Asn-117. The LRRCT domain occupies 185–247 (NPFNCECDLF…ITVLQAKCRN (63 aa)). 2 N-linked (GlcNAc...) asparagine glycosylation sites follow: Asn-205 and Asn-247. A disordered region spans residues 250–294 (LPARPVSHPTPYSTDAQREPDENSGFNPDEILSVEPPASSTTDAS). The 88-residue stretch at 292–379 (DASAGPAIKL…FNHTCLTFTT (88 aa)) folds into the Fibronectin type-III domain. The chain crosses the membrane as a helical span at residues 398–418 (IMTILGCLFGMVIVLGAVYYC). Residues 419-820 (LRKRRMQEEK…WKGVSAQQKL (402 aa)) lie on the Cytoplasmic side of the membrane. 2 disordered regions span residues 508 to 527 (GAGGDGLARPEDDLPDLENG) and 589 to 612 (SATGPGALERPSFLSPPYKESSHH). Ser-619, Ser-668, and Ser-672 each carry phosphoserine. The disordered stretch occupies residues 654 to 677 (TGLAKGDSKYIEKGSPLNSPLDRL).

As to quaternary structure, interacts with PPP1CA.

It localises to the membrane. Functionally, inhibits phosphatase activity of protein phosphatase 1 (PP1) complexes. The protein is Protein phosphatase 1 regulatory subunit 29 (ELFN2) of Homo sapiens (Human).